Consider the following 432-residue polypeptide: Adenylosuccinate synthetase (432 aa).

Residues 13–19 and 41–43 contribute to the GTP site; these read GDEGKGK and GHT. Residue aspartate 14 is the Proton acceptor of the active site. Residues aspartate 14 and glycine 41 each contribute to the Mg(2+) site. Residues 14–17, 39–42, threonine 130, arginine 144, glutamine 225, threonine 240, and arginine 304 each bind IMP; these read DEGK and NAGH. Residue histidine 42 is the Proton donor of the active site. 300–306 provides a ligand contact to substrate; that stretch reads AVTGRPR. GTP is bound by residues arginine 306, 332 to 334, and 415 to 417; these read KLD and STG.

It belongs to the adenylosuccinate synthetase family. Homodimer. It depends on Mg(2+) as a cofactor.

The protein resides in the cytoplasm. The catalysed reaction is IMP + L-aspartate + GTP = N(6)-(1,2-dicarboxyethyl)-AMP + GDP + phosphate + 2 H(+). The protein operates within purine metabolism; AMP biosynthesis via de novo pathway; AMP from IMP: step 1/2. In terms of biological role, plays an important role in the de novo pathway of purine nucleotide biosynthesis. Catalyzes the first committed step in the biosynthesis of AMP from IMP. This is Adenylosuccinate synthetase from Actinobacillus pleuropneumoniae serotype 3 (strain JL03).